A 1129-amino-acid polypeptide reads, in one-letter code: Protein LANA1 (1129 aa).

2 disordered regions span residues 1–988 (MAPP…PVPY) and 1110–1129 (LPLT…QEMT). 2 stretches are compositionally biased toward basic and acidic residues: residues 28 to 41 (RSPE…DLHL) and 48 to 58 (VADSVDGRECG). Over residues 85-104 (PVAPIPSPAPATPLPPPALL) the composition is skewed to pro residues. Polar residues predominate over residues 139 to 156 (SPESSQRPPLSSPTGRPD). Positions 161–185 (MRPPPSQQTTPPHSPTTPPPEPPSK) are enriched in pro residues. Low complexity predominate over residues 186 to 197 (SSPDSLAPSTLR). Residues 207–217 (PQGPSTLNPIC) are compositionally biased toward polar residues. Over residues 263-275 (PISIGSSSPSEGS) the composition is skewed to low complexity. Composition is skewed to basic and acidic residues over residues 292 to 301 (EASKNEKECS) and 314 to 323 (EISKESQVDK). Positions 324–419 (DDNDNKDDEE…DKKEDEEDGG (96 aa)) are enriched in acidic residues. Low complexity predominate over residues 431 to 471 (QQQQEPQQQEPQQQEPQQQEPQQQEPQQQEPQQQEPQQQEP). Basic and acidic residues predominate over residues 472–528 (QQREPQQREPQQREPQQREPQQREPQQREPQQREPQQREPQQREPQQREPQQREPQQ). The segment covering 529 to 596 (REPQQQEPQQ…QQQEPQQQDE (68 aa)) has biased composition (low complexity). Over residues 597–888 (QQQDEQQQDE…QELEEVEEQE (292 aa)) the composition is skewed to acidic residues. A compositionally biased stretch (polar residues) spans 924–934 (THEQIASSPPG). Basic residues predominate over residues 962 to 979 (PGVRMRRVPVTHPKKPHP). The interval 1008–1129 (FLGKDGRRDP…GPGDSPQEMT (122 aa)) is DNA-binding domain.

In terms of assembly, homooligomer. Interacts with host BRD2. Interacts with host RELA, ELOB, ELOC and CUL5; these interactions induce the proteasomal degradation of host RELA. Interacts with host TRIM28 and NFE2L2/NRF2; these interactions are essential for the shutdown of lytic gene expression during the early stage of infection. Interacts (via N-terminus) with host histones H2A and H2B; these interactions are essential to dock LANA1 onto chromosomes. Interacts with host BUB1 and PCNA. Interacts with host NAP1L1; this interaction is required for LANA1-dependent DNA replication. Interacts with components of the host MLL1 complex KMT2A and WDR5.

It is found in the host nucleus. Functionally, multifunctional protein that plays a role in the replication and long-term persistence of the viral episomal genome in dividing cells. Binds to mitotic chromosomes via its N-terminal region and to a 16-bp imperfect palindrome within the origin of replication (oriP) located in the viral terminal repeat (TR) through its C-terminal. Tethers viral episomes to chromosomes during mitosis. Plays a critical role in the shutdown of lytic gene expression during the early stage of infection by interacting with host TRIM28. Also plays a role in the repression of host NF-kappa-B activity upon TNF-alpha stimulation by promoting the proteasomal degradation of host RELA. Promotes nuclear localization and cleavage of host STAT6 leading to constitutive activation of the IL13/STAT6 signaling pathway to promote viral latency. Interacts with and modulates the histone methyltransferase MLL1 complex activity, leading to its recruitment on viral DNA terminal repeats changing the dynamic of histone H3 methylated 'Lys-4'(H3K4me) profile during the initial hours following infection. This is Protein LANA1 (LANA1) from Homo sapiens (Human).